The following is a 285-amino-acid chain: Neuralized-like protein 2 (285 aa).

The tract at residues 1 to 20 is disordered; the sequence is MAAASEPVDSGALWGLERPE. The NHR domain occupies 23–244; it reads PTRFHRVHGA…STKSVRLVQL (222 aa). In terms of domain architecture, SOCS box spans 250–285; it reads SLQTLCRLVIQRSMVHRLAIDGLHLPKELKDFCKYE.

Probable component the ECS(NEURL2) E3 ubiquitin-protein ligase complex consisting of ELOB/Elongin B, ELOC/Elongin C, CUL5, RBX1 and NEURL2. Interacts with CTNNB1. As to expression, expressed specifically in skeletal and cardiac muscles.

The protein resides in the cytoplasm. Its pathway is protein modification; protein ubiquitination. Plays an important role in the process of myofiber differentiation and maturation. Probable substrate-recognition component of a SCF-like ECS (Elongin BC-CUL2/5-SOCS-box protein) E3 ubiquitin-protein ligase complex, which mediates the ubiquitination of proteins. Probably contributes to catalysis through recognition and positioning of the substrate and the ubiquitin-conjugating enzyme. During myogenesis, controls the ubiquitination and degradation of the specific pool of CTNNB1/beta-catenin located at the sarcolemma. This chain is Neuralized-like protein 2 (NEURL2), found in Homo sapiens (Human).